The chain runs to 206 residues: Small ribosomal subunit protein uS4 (206 aa).

In terms of domain architecture, S4 RNA-binding spans 96–157 (CRLDNVVYRM…KCRNQLRIAQ (62 aa)).

Belongs to the universal ribosomal protein uS4 family. In terms of assembly, part of the 30S ribosomal subunit. Contacts protein S5. The interaction surface between S4 and S5 is involved in control of translational fidelity.

In terms of biological role, one of the primary rRNA binding proteins, it binds directly to 16S rRNA where it nucleates assembly of the body of the 30S subunit. With S5 and S12 plays an important role in translational accuracy. This Stutzerimonas stutzeri (strain A1501) (Pseudomonas stutzeri) protein is Small ribosomal subunit protein uS4.